Reading from the N-terminus, the 654-residue chain is MEKSATRQKALLIALPLLFSPLASAVQQAVLDTRGAPLITVNGLTFKDLNRDGKLNPYEDWRLPAAERAADLVSRMTLAEKAGVMMHGSAPTAGSVTGAGTQYDLNAAKTMIADRYVNSFITRLSGDNPAQMAEENNKLQQLAEATRLGIPLTISTDPRSSFQSLVGVSVSVGKFSKWPETLGLAAIGDEELVRRFADIVRQEYRAVGITEALSPQADLATEPRWPRIDGTFGEDPDLTKKMVRGYVTGMQNGKNGLNAQSVISIVKHWVGYGAAKDGWDSHNVYGKYAQFRQNNLQWHIDPFTGAFEAHAAGIMPTYSILRNASWHGKPIEQVGAGFNRFLLTDLLRGQYGFDGVILSDWLITNDCKGDCLTGVKPGEKPVPRGMPWGVEKLTPAERFVKAVNAGVDQFGGVTDSALLVQAVQDGKLTEARLDTSVNRILKQKFQTGLFERPYVNATQANDIVGRADWQQLADDTQARSLVLLQNNNLLPLRKGSRVWLHGIAANAAQEVGFIVVNTPEQADVALIRTHTPYEQPHKNFFFGSRHHEGSLAFRNDNPDYQAIVRASAKVPTLVTVYMERPAILTNVVDKTRAVVANFGVSDSVLLNRLMSGAAYTAKLPFELPSSMSAVRNQQPDLPYDSAKPLFPFGYGLPH.

An N-terminal signal peptide occupies residues 1–25 (MEKSATRQKALLIALPLLFSPLASA). Residues aspartate 235 and aspartate 360 contribute to the active site.

The protein belongs to the glycosyl hydrolase 3 family.

It localises to the periplasm. It carries out the reaction Hydrolysis of terminal, non-reducing beta-D-glucosyl residues with release of beta-D-glucose.. The enzyme catalyses Hydrolysis of (1-&gt;4)-beta-D-xylans, to remove successive D-xylose residues from the non-reducing termini.. Functionally, exhibits both beta-glucosidase and beta-xylosidase activities. The protein is Periplasmic beta-glucosidase/beta-xylosidase (bgxA) of Dickeya chrysanthemi (Pectobacterium chrysanthemi).